The chain runs to 463 residues: Quinolone resistance protein NorB (463 aa).

14 helical membrane passes run 17–37, 53–73, 86–106, 107–127, 142–162, 165–185, 201–221, 230–250, 273–293, 299–319, 334–354, 357–377, 403–423, and 435–455; these read IGIV…VNVV, IAVS…GGLA, IILN…LLLI, IGRL…LSII, YWSI…GAVA, LGWR…LFLI, FDIK…ILIT, SLLF…FIVL, TASN…NTFV, YSSL…LIMI, PMLI…LTFL, ILYV…LGIY, MASA…YAIV, and IALW…LLLV.

It belongs to the major facilitator superfamily. TCR/Tet family.

It is found in the cell membrane. In terms of biological role, multidrug efflux pump that acts independently of NorA and is one of the factors that confers resistance against diverse quinolones and chemical compounds. Can facilitate bacterial survival in vivo when overexpressed in an abscess and may contribute to the relative resistance of staphylococcal abscesses to antimicrobial therapy. This is Quinolone resistance protein NorB (norB) from Staphylococcus aureus (strain MW2).